The following is an 87-amino-acid chain: Hemocyanin alpha chain (87 aa).

Belongs to the tyrosinase family. Hemocyanin subfamily. As to quaternary structure, polymer that contains six different types of chains (alpha, beta, gamma, delta, epsilon, and zeta). In terms of tissue distribution, hemolymph.

The protein localises to the secreted. Its subcellular location is the extracellular space. Hemocyanins are copper-containing oxygen carriers occurring freely dissolved in the hemolymph of many mollusks and arthropods. The polypeptide is Hemocyanin alpha chain (Tachypleus tridentatus (Japanese horseshoe crab)).